The chain runs to 596 residues: MAEKKEFVVGIDLGTTNSVIAWMKPDGTVEVIPNAEGSRITPSVVAFTKSGEILVGEPAKRQMILNPERTIKSIKRKMGTDYKVRIDDKEYTPQEISAFILKKLKKDAEAYLGGEIKKAVITCPAYFNDAQRQATKEAGIIAGLEVLRIINEPTAAALAYGLDKAGKEQKVLVYDLGGGTFDVSILEIGDGVIEVIATAGNNHLGGDDFDQRLIDWMAEEFKKQHGIDLREDRQALQRLRDAAEKAKIELSTKMETDVSLPFIAVSPSGQPLHLEMRITRSLFESLTRDLVEMTRGPIEQALNDAKLSPQDIDEIILVGGMTRVPMVQRFIKEFFGKEPNKSVNPDEAVAIGAAIQAAILAGTEGAKGRDIVLVDVTPLTLGIEVKGGLFEPIIPRNTKIPVRKSKIFTTVEDGQTEVEIRVYQGERPIARENIFLGSFKLVGIPPAPRGVPQIEVTFDIDSDGIVHVSAKDLGSGKEQSMVVTGRHKLSEEDIKRMIEDAKRYEEQDKRLKEEIELKNRADDLAYSVEKTLREHGDKIPADLKSKLENMIKELRDAINRNDIPRVKMLFDDLQKESMKIGEYLYKSATGGEATNQ.

Position 180 is a phosphothreonine; by autocatalysis (Thr-180).

The protein belongs to the heat shock protein 70 family.

Functionally, acts as a chaperone. In Thermotoga neapolitana (strain ATCC 49049 / DSM 4359 / NBRC 107923 / NS-E), this protein is Chaperone protein DnaK.